The sequence spans 252 residues: NADP-dependent (R)-specific alcohol dehydrogenase (252 aa).

NADP(+) contacts are provided by residues threonine 16–isoleucine 19, arginine 39–histidine 40, aspartate 63–alanine 64, asparagine 90, tyrosine 156, lysine 160, and isoleucine 191–leucine 195. Tyrosine 156 functions as the Proton donor/acceptor in the catalytic mechanism. Glutamine 252 provides a ligand contact to Mg(2+).

Belongs to the short-chain dehydrogenases/reductases (SDR) family. In terms of assembly, homotetramer. It depends on Mg(2+) as a cofactor.

It catalyses the reaction a secondary alcohol + NADP(+) = a ketone + NADPH + H(+). It carries out the reaction acetophenone + NADPH + H(+) = (R)-1-phenylethanol + NADP(+). The enzyme catalyses 2,5-hexanedione + 2 NADPH + 2 H(+) = (2R,5R)-hexanediol + 2 NADP(+). The catalysed reaction is ethyl 3-oxobutanoate + NADPH + H(+) = ethyl (R)-3-hydroxybutanoate + NADP(+). It catalyses the reaction 2-octanone + NADPH + H(+) = (2R)-octan-2-ol + NADP(+). Its function is as follows. NADP-dependent (R)-specific alcohol dehydrogenase (ADH) with a broad substrate specificity, able to catalyze in vitro the stereoselective reduction of several aliphatic and aromatic ketones as well as beta-keto esters to the corresponding enantiomerically pure alcohols. This chain is NADP-dependent (R)-specific alcohol dehydrogenase, found in Lentilactobacillus kefiri (Lactobacillus kefiri).